The chain runs to 237 residues: Class B acid phosphatase (237 aa).

Positions 1–23 (MRKTPLALSAVFLLLSLNQSAFA) are cleaved as a signal peptide. Residue D69 is the Nucleophile of the active site. Mg(2+) contacts are provided by D69 and D71. The active-site Proton donor is the D71. Substrate-binding positions include 137-138 (TG) and K177. D192 serves as a coordination point for Mg(2+).

It belongs to the class B bacterial acid phosphatase family. Homotetramer. It depends on Mg(2+) as a cofactor.

The protein resides in the periplasm. The enzyme catalyses a phosphate monoester + H2O = an alcohol + phosphate. Dephosphorylates several organic phosphate monoesters. Also has a phosphotransferase activity catalyzing the transfer of low-energy phosphate groups from organic phosphate monoesters to free hydroxyl groups of various organic compounds. This chain is Class B acid phosphatase, found in Rahnella sp. (strain Y9602).